A 786-amino-acid polypeptide reads, in one-letter code: UPF0313 protein SO_0311 (786 aa).

In terms of domain architecture, Radical SAM core spans 371-649; it reads AYDMIKTSIN…KALLRYHDPA (279 aa). [4Fe-4S] cluster is bound by residues C385, C389, and C392. Disordered stretches follow at residues 669-688 and 698-786; these read NSPN…PKWM and LTRF…QQAK. Basic and acidic residues-rich tracts occupy residues 679-688 and 706-717; these read GRNERGPKWM and FDERKGKGDAKG. The segment covering 718-731 has biased composition (low complexity); it reads KPSASKPKGPKSGA. Polar residues predominate over residues 732 to 741; sequence NAPQSQQPKT.

This sequence belongs to the UPF0313 family. [4Fe-4S] cluster serves as cofactor.

The sequence is that of UPF0313 protein SO_0311 from Shewanella oneidensis (strain ATCC 700550 / JCM 31522 / CIP 106686 / LMG 19005 / NCIMB 14063 / MR-1).